An 870-amino-acid chain; its full sequence is DNA mismatch repair protein MutS (870 aa).

Residue 620 to 627 participates in ATP binding; it reads GPNMAGKS.

Belongs to the DNA mismatch repair MutS family.

In terms of biological role, this protein is involved in the repair of mismatches in DNA. It is possible that it carries out the mismatch recognition step. This protein has a weak ATPase activity. The protein is DNA mismatch repair protein MutS of Syntrophotalea carbinolica (strain DSM 2380 / NBRC 103641 / GraBd1) (Pelobacter carbinolicus).